The sequence spans 966 residues: Leucine--tRNA ligase (966 aa).

The 'HIGH' region signature appears at 71–82 (PYPSGAGLHVGH). A disordered region spans residues 561 to 580 (YSPRTFDPDDADTKPETPLS). Over residues 571 to 580 (ADTKPETPLS) the composition is skewed to basic and acidic residues. The 'KMSKS' region signature appears at 734 to 738 (KMGKS). Lys-737 serves as a coordination point for ATP.

The protein belongs to the class-I aminoacyl-tRNA synthetase family.

It is found in the cytoplasm. The catalysed reaction is tRNA(Leu) + L-leucine + ATP = L-leucyl-tRNA(Leu) + AMP + diphosphate. This Streptomyces coelicolor (strain ATCC BAA-471 / A3(2) / M145) protein is Leucine--tRNA ligase.